The following is a 116-amino-acid chain: Large ribosomal subunit protein uL22 (116 aa).

This sequence belongs to the universal ribosomal protein uL22 family. Part of the 50S ribosomal subunit.

This protein binds specifically to 23S rRNA; its binding is stimulated by other ribosomal proteins, e.g. L4, L17, and L20. It is important during the early stages of 50S assembly. It makes multiple contacts with different domains of the 23S rRNA in the assembled 50S subunit and ribosome. Functionally, the globular domain of the protein is located near the polypeptide exit tunnel on the outside of the subunit, while an extended beta-hairpin is found that lines the wall of the exit tunnel in the center of the 70S ribosome. This Leptospira biflexa serovar Patoc (strain Patoc 1 / Ames) protein is Large ribosomal subunit protein uL22.